Reading from the N-terminus, the 544-residue chain is Flagellar hook-associated protein 1 (544 aa).

It belongs to the flagella basal body rod proteins family.

It localises to the secreted. The protein localises to the bacterial flagellum. The polypeptide is Flagellar hook-associated protein 1 (flgK) (Buchnera aphidicola subsp. Schizaphis graminum (strain Sg)).